Consider the following 536-residue polypeptide: Cytochrome c oxidase subunit 1 (536 aa).

Residues 19–39 form a helical membrane-spanning segment; sequence IGMTYLGFGMLSAMMGTGMSV. Glu-44 is a Ca(2+) binding site. His-67 is a Fe(II)-heme a binding site. The next 6 membrane-spanning stretches (helical) occupy residues 69–89, 103–123, 152–172, 188–208, 240–260, and 273–293; these read LLMMFFFIMPVWMGAFGNFFL, LNNISFWCLPPALVCMVCSVL, AMFAMHLTSMSSLLGAMNFMV, PLFAWAMFLTAMLLLLSLPVL, LFWFFGHPEVYILMMPGFGVM, and FGEMGMLYAMGSIGFLGFLVW. His-246 provides a ligand contact to Cu cation. The segment at residues 246–250 is a cross-link (1'-histidyl-3'-tyrosine (His-Tyr)); sequence HPEVY. Tyr-250 contributes to the O2 binding site. The Cu cation site is built by His-295 and His-296. 2 consecutive transmembrane segments (helical) span residues 315–335 and 341–361; these read MVIAVPTGIKIFSWLATIYGG and VPMLFALGFLFLFTMGGLTGV. Mg(2+)-binding residues include His-373 and Asp-374. Residue His-381 coordinates heme a3. Residue His-383 coordinates Fe(II)-heme a. 2 consecutive transmembrane segments (helical) span residues 388-408 and 418-438; these read MGALFSLMGAYYYWGPAMFGL and HFWLLFMSVNVMFLPMHFLGL. Ca(2+) is bound at residue Pro-446. Residues 461 to 481 traverse the membrane as a helical segment; sequence MGSAMSVMSVLVGLKSVLVQL.

It belongs to the heme-copper respiratory oxidase family. Component of the cytochrome c oxidase (complex IV, CIV), a multisubunit enzyme composed of a catalytic core of 3 subunits and several supernumerary subunits. The complex exists as a monomer or a dimer and forms supercomplexes (SCs) in the inner mitochondrial membrane with ubiquinol-cytochrome c oxidoreductase (cytochrome b-c1 complex, complex III, CIII). The cofactor is heme. Cu cation is required as a cofactor.

Its subcellular location is the mitochondrion inner membrane. The enzyme catalyses 4 Fe(II)-[cytochrome c] + O2 + 8 H(+)(in) = 4 Fe(III)-[cytochrome c] + 2 H2O + 4 H(+)(out). Its pathway is energy metabolism; oxidative phosphorylation. Component of the cytochrome c oxidase, the last enzyme in the mitochondrial electron transport chain which drives oxidative phosphorylation. The respiratory chain contains 3 multisubunit complexes succinate dehydrogenase (complex II, CII), ubiquinol-cytochrome c oxidoreductase (cytochrome b-c1 complex, complex III, CIII) and cytochrome c oxidase (complex IV, CIV), that cooperate to transfer electrons derived from NADH and succinate to molecular oxygen, creating an electrochemical gradient over the inner membrane that drives transmembrane transport and the ATP synthase. Cytochrome c oxidase is the component of the respiratory chain that catalyzes the reduction of oxygen to water. Electrons originating from reduced cytochrome c in the intermembrane space (IMS) are transferred via the dinuclear copper A center (CU(A)) of subunit 2 and heme A of subunit 1 to the active site in subunit 1, a binuclear center (BNC) formed by heme A3 and copper B (CU(B)). The BNC reduces molecular oxygen to 2 water molecules using 4 electrons from cytochrome c in the IMS and 4 protons from the mitochondrial matrix. This Debaryomyces hansenii (strain ATCC 36239 / CBS 767 / BCRC 21394 / JCM 1990 / NBRC 0083 / IGC 2968) (Yeast) protein is Cytochrome c oxidase subunit 1 (COX1).